A 61-amino-acid polypeptide reads, in one-letter code: Sodium/potassium-transporting ATPase subunit gamma (61 aa).

The chain crosses the membrane as a helical span at residues 24–44 (KGGLIFAAIAFVVGMLIIFSG).

It belongs to the FXYD family. Regulatory subunit of the sodium/potassium-transporting ATPase which is composed of a catalytic alpha subunit, an auxiliary non-catalytic beta subunit and an additional regulatory subunit.

It is found in the membrane. In terms of biological role, may be involved in forming the receptor site for cardiac glycoside binding or may modulate the transport function of the sodium ATPase. The chain is Sodium/potassium-transporting ATPase subunit gamma (fxyd2) from Xenopus laevis (African clawed frog).